The chain runs to 217 residues: Protein GrpE (217 aa).

3 stretches are compositionally biased toward acidic residues: residues 1–28 (MSDDQGDAVEASSEADEEASTSPDEGDD), 136–152 (DILDGEGVEAIEPDPGT), and 204–217 (SEAEDDADGEDGDE). 3 disordered regions span residues 1–44 (MSDD…NDPA), 135–157 (DDILDGEGVEAIEPDPGTETDPK), and 193–217 (QVTVSEGPSGDSEAEDDADGEDGDE).

This sequence belongs to the GrpE family. As to quaternary structure, homodimer.

The protein resides in the cytoplasm. Participates actively in the response to hyperosmotic and heat shock by preventing the aggregation of stress-denatured proteins, in association with DnaK and GrpE. It is the nucleotide exchange factor for DnaK and may function as a thermosensor. Unfolded proteins bind initially to DnaJ; upon interaction with the DnaJ-bound protein, DnaK hydrolyzes its bound ATP, resulting in the formation of a stable complex. GrpE releases ADP from DnaK; ATP binding to DnaK triggers the release of the substrate protein, thus completing the reaction cycle. Several rounds of ATP-dependent interactions between DnaJ, DnaK and GrpE are required for fully efficient folding. In Natronomonas pharaonis (strain ATCC 35678 / DSM 2160 / CIP 103997 / JCM 8858 / NBRC 14720 / NCIMB 2260 / Gabara) (Halobacterium pharaonis), this protein is Protein GrpE.